Consider the following 358-residue polypeptide: Cyanide hydratase (358 aa).

Residues 8–287 (YKAAAVNAEP…QGLLFVDIDL (280 aa)) form the CN hydrolase domain. Catalysis depends on E48, which acts as the Proton acceptor. Residue K130 is part of the active site. The active-site Nucleophile is the C165.

The protein belongs to the carbon-nitrogen hydrolase superfamily. Nitrilase family. As to quaternary structure, oligomer of dimers, forming left-handed helical fibers.

It carries out the reaction formamide = hydrogen cyanide + H2O. Functionally, catalyzes the hydration of cyanide to formamide. Degradation of cyanide may be important for plant pathogenic fungi in infection of cyanogenic plants. This Penicillium rubens (strain ATCC 28089 / DSM 1075 / NRRL 1951 / Wisconsin 54-1255) (Penicillium chrysogenum) protein is Cyanide hydratase.